We begin with the raw amino-acid sequence, 252 residues long: 14-3-3 protein homolog 1 (252 aa).

Belongs to the 14-3-3 family.

This chain is 14-3-3 protein homolog 1, found in Schistosoma mansoni (Blood fluke).